The following is a 517-amino-acid chain: Bifunctional purine biosynthesis protein PurH (517 aa).

The MGS-like domain maps to 1–145; sequence MSPLALVSVS…KNHKDVSVLV (145 aa).

It belongs to the PurH family.

The enzyme catalyses (6R)-10-formyltetrahydrofolate + 5-amino-1-(5-phospho-beta-D-ribosyl)imidazole-4-carboxamide = 5-formamido-1-(5-phospho-D-ribosyl)imidazole-4-carboxamide + (6S)-5,6,7,8-tetrahydrofolate. It carries out the reaction IMP + H2O = 5-formamido-1-(5-phospho-D-ribosyl)imidazole-4-carboxamide. The protein operates within purine metabolism; IMP biosynthesis via de novo pathway; 5-formamido-1-(5-phospho-D-ribosyl)imidazole-4-carboxamide from 5-amino-1-(5-phospho-D-ribosyl)imidazole-4-carboxamide (10-formyl THF route): step 1/1. Its pathway is purine metabolism; IMP biosynthesis via de novo pathway; IMP from 5-formamido-1-(5-phospho-D-ribosyl)imidazole-4-carboxamide: step 1/1. This is Bifunctional purine biosynthesis protein PurH from Prochlorococcus marinus (strain MIT 9301).